The following is a 275-amino-acid chain: N-acetyltransferase YodP (275 aa).

An N-acetyltransferase domain is found at Phe-125–Trp-271.

This sequence belongs to the acetyltransferase family.

It carries out the reaction (3S)-3,6-diaminohexanoate + acetyl-CoA = (3S)-6-acetamido-3-aminohexanoate + CoA + H(+). Functionally, in vitro, is able to catalyze the acetylation of beta-lysine to N6-acetyl-beta-lysine, an archaeal osmolyte produced by methanogenic archaea. Its physiological function has not yet been elucidated. This is N-acetyltransferase YodP (yodP) from Bacillus subtilis (strain 168).